Consider the following 230-residue polypeptide: Probable methylthioribulose-1-phosphate dehydratase (230 aa).

C87 provides a ligand contact to substrate. 2 residues coordinate Zn(2+): H105 and H107. E129 functions as the Proton donor/acceptor in the catalytic mechanism. H185 serves as a coordination point for Zn(2+).

This sequence belongs to the aldolase class II family. MtnB subfamily. Requires Zn(2+) as cofactor.

The protein resides in the cytoplasm. It carries out the reaction 5-(methylsulfanyl)-D-ribulose 1-phosphate = 5-methylsulfanyl-2,3-dioxopentyl phosphate + H2O. It functions in the pathway amino-acid biosynthesis; L-methionine biosynthesis via salvage pathway; L-methionine from S-methyl-5-thio-alpha-D-ribose 1-phosphate: step 2/6. In terms of biological role, catalyzes the dehydration of methylthioribulose-1-phosphate (MTRu-1-P) into 2,3-diketo-5-methylthiopentyl-1-phosphate (DK-MTP-1-P). The sequence is that of Probable methylthioribulose-1-phosphate dehydratase from Drosophila pseudoobscura pseudoobscura (Fruit fly).